Consider the following 144-residue polypeptide: Methylglyoxal synthase (144 aa).

The MGS-like domain maps to 1–144 (MNIALIAHDE…EEEQRKFLTD (144 aa)). Substrate is bound by residues His-8, Lys-12, 34-37 (TGTT), and 54-55 (SG). The active-site Proton donor/acceptor is the Asp-60. Residue His-87 participates in substrate binding.

The protein belongs to the methylglyoxal synthase family.

The enzyme catalyses dihydroxyacetone phosphate = methylglyoxal + phosphate. In terms of biological role, catalyzes the formation of methylglyoxal from dihydroxyacetone phosphate. The protein is Methylglyoxal synthase of Exiguobacterium sibiricum (strain DSM 17290 / CCUG 55495 / CIP 109462 / JCM 13490 / 255-15).